Reading from the N-terminus, the 258-residue chain is Type III pantothenate kinase (258 aa).

Aspartate 12–alanine 19 contacts ATP. Substrate-binding positions include tyrosine 94 and glycine 109–valine 112. Aspartate 111 functions as the Proton acceptor in the catalytic mechanism. K(+) is bound at residue aspartate 132. Threonine 135 contributes to the ATP binding site. Threonine 187 provides a ligand contact to substrate.

The protein belongs to the type III pantothenate kinase family. In terms of assembly, homodimer. It depends on NH4(+) as a cofactor. The cofactor is K(+).

It localises to the cytoplasm. It catalyses the reaction (R)-pantothenate + ATP = (R)-4'-phosphopantothenate + ADP + H(+). It participates in cofactor biosynthesis; coenzyme A biosynthesis; CoA from (R)-pantothenate: step 1/5. Its function is as follows. Catalyzes the phosphorylation of pantothenate (Pan), the first step in CoA biosynthesis. This Borreliella afzelii (strain PKo) (Borrelia afzelii) protein is Type III pantothenate kinase.